The primary structure comprises 212 residues: Riboflavin kinase (212 aa).

The H-T-H motif-like stretch occupies residues 1-87; sequence MKMKTLFLLI…YEEISTALYS (87 aa). A riboflavin kinase region spans residues 88-212; that stretch reads GFIVGEVISG…DGDKVRIEVV (125 aa). Residue 97–102 coordinates CDP; the sequence is GIGEGA. Mg(2+) contacts are provided by Thr-124 and Asn-126. Residues Thr-180 and Glu-188 each contribute to the FMN site. 193 to 196 lines the CDP pocket; it reads VKLR.

The protein belongs to the archaeal riboflavin kinase family. Mg(2+) is required as a cofactor.

The enzyme catalyses riboflavin + CTP = CDP + FMN + H(+). The protein operates within cofactor biosynthesis; FMN biosynthesis; FMN from riboflavin (CTP route): step 1/1. Catalyzes the CTP-dependent phosphorylation of riboflavin (vitamin B2) to form flavin mononucleotide (FMN). The chain is Riboflavin kinase (ribK) from Pyrococcus abyssi (strain GE5 / Orsay).